Reading from the N-terminus, the 309-residue chain is RING finger protein mug145 (309 aa).

A helical membrane pass occupies residues 23 to 43; it reads ILLFALVIILSVIFINFFFFY. The segment at 205-247 adopts an RING-type; atypical zinc-finger fold; it reads CIICYADYAFDDILRVLPCEHVFHTQCIDTWMTTMKASCPLCN.

The protein resides in the membrane. Functionally, has a role in meiosis. The sequence is that of RING finger protein mug145 (mug145) from Schizosaccharomyces pombe (strain 972 / ATCC 24843) (Fission yeast).